The primary structure comprises 137 residues: Large ribosomal subunit protein uL16 (137 aa).

It belongs to the universal ribosomal protein uL16 family. Part of the 50S ribosomal subunit.

In terms of biological role, binds 23S rRNA and is also seen to make contacts with the A and possibly P site tRNAs. The chain is Large ribosomal subunit protein uL16 from Pseudomonas paraeruginosa (strain DSM 24068 / PA7) (Pseudomonas aeruginosa (strain PA7)).